A 406-amino-acid chain; its full sequence is 4-hydroxy-3-methylbut-2-en-1-yl diphosphate synthase (ferredoxin) (406 aa).

Positions 315, 318, 349, and 356 each coordinate [4Fe-4S] cluster.

This sequence belongs to the IspG family. It depends on [4Fe-4S] cluster as a cofactor.

The catalysed reaction is (2E)-4-hydroxy-3-methylbut-2-enyl diphosphate + 2 oxidized [2Fe-2S]-[ferredoxin] + H2O = 2-C-methyl-D-erythritol 2,4-cyclic diphosphate + 2 reduced [2Fe-2S]-[ferredoxin] + H(+). It participates in isoprenoid biosynthesis; isopentenyl diphosphate biosynthesis via DXP pathway; isopentenyl diphosphate from 1-deoxy-D-xylulose 5-phosphate: step 5/6. In terms of biological role, converts 2C-methyl-D-erythritol 2,4-cyclodiphosphate (ME-2,4cPP) into 1-hydroxy-2-methyl-2-(E)-butenyl 4-diphosphate. The chain is 4-hydroxy-3-methylbut-2-en-1-yl diphosphate synthase (ferredoxin) from Trichodesmium erythraeum (strain IMS101).